The following is a 172-amino-acid chain: Shikimate kinase (172 aa).

An ATP-binding site is contributed by 11 to 16 (GAGKST). S15 lines the Mg(2+) pocket. Residues D33, R57, and G79 each coordinate substrate. ATP is bound at residue R117. R136 provides a ligand contact to substrate. ATP is bound at residue R153.

Belongs to the shikimate kinase family. As to quaternary structure, monomer. Requires Mg(2+) as cofactor.

The protein resides in the cytoplasm. It carries out the reaction shikimate + ATP = 3-phosphoshikimate + ADP + H(+). It participates in metabolic intermediate biosynthesis; chorismate biosynthesis; chorismate from D-erythrose 4-phosphate and phosphoenolpyruvate: step 5/7. Its function is as follows. Catalyzes the specific phosphorylation of the 3-hydroxyl group of shikimic acid using ATP as a cosubstrate. This chain is Shikimate kinase, found in Pseudomonas savastanoi pv. phaseolicola (strain 1448A / Race 6) (Pseudomonas syringae pv. phaseolicola (strain 1448A / Race 6)).